The following is a 406-amino-acid chain: Tryptophan synthase beta chain (406 aa).

Lys-99 is modified (N6-(pyridoxal phosphate)lysine).

The protein belongs to the TrpB family. As to quaternary structure, tetramer of two alpha and two beta chains. Pyridoxal 5'-phosphate serves as cofactor.

The catalysed reaction is (1S,2R)-1-C-(indol-3-yl)glycerol 3-phosphate + L-serine = D-glyceraldehyde 3-phosphate + L-tryptophan + H2O. The protein operates within amino-acid biosynthesis; L-tryptophan biosynthesis; L-tryptophan from chorismate: step 5/5. Its function is as follows. The beta subunit is responsible for the synthesis of L-tryptophan from indole and L-serine. In Rhizobium meliloti (strain 1021) (Ensifer meliloti), this protein is Tryptophan synthase beta chain.